A 32-amino-acid chain; its full sequence is Beta-hexosaminidase (32 aa).

One can recognise a GH18 domain in the interval 1 to 32 (GKSSSRPLGDATLGDLDFDIEVTQDYWDDLAR). Glu21 (proton donor) is an active-site residue.

This sequence belongs to the glycosyl hydrolase 18 family. Chitinase class II subfamily.

It catalyses the reaction Hydrolysis of terminal non-reducing N-acetyl-D-hexosamine residues in N-acetyl-beta-D-hexosaminides.. With respect to regulation, activity is decreased by HgCl(2) and maltose. Activity is stimulated by Na(2)SeO(4), BaCl(2), MgCl(2), chondroitin 6-sulfate and phenylmethylsulfonyl fluoride. Functionally, preferentially hydrolyzes pNP-GlcNAc, hydrolyzes pNP-GalNAc to a lesser extent. This chain is Beta-hexosaminidase, found in Palythoa caribaeorum (White encrusting zoanthid coral).